We begin with the raw amino-acid sequence, 140 residues long: Large ribosomal subunit protein bL17 (140 aa).

The protein belongs to the bacterial ribosomal protein bL17 family. As to quaternary structure, part of the 50S ribosomal subunit. Contacts protein L32.

This chain is Large ribosomal subunit protein bL17, found in Rhizobium johnstonii (strain DSM 114642 / LMG 32736 / 3841) (Rhizobium leguminosarum bv. viciae).